The following is a 215-amino-acid chain: Endonuclease III (215 aa).

Residues 113-132 (REDLESLPGVGRKTANVILN) enclose the HhH domain. The [4Fe-4S] cluster site is built by C192, C199, C202, and C208.

It belongs to the Nth/MutY family. Requires [4Fe-4S] cluster as cofactor.

The enzyme catalyses 2'-deoxyribonucleotide-(2'-deoxyribose 5'-phosphate)-2'-deoxyribonucleotide-DNA = a 3'-end 2'-deoxyribonucleotide-(2,3-dehydro-2,3-deoxyribose 5'-phosphate)-DNA + a 5'-end 5'-phospho-2'-deoxyribonucleoside-DNA + H(+). In terms of biological role, DNA repair enzyme that has both DNA N-glycosylase activity and AP-lyase activity. The DNA N-glycosylase activity releases various damaged pyrimidines from DNA by cleaving the N-glycosidic bond, leaving an AP (apurinic/apyrimidinic) site. The AP-lyase activity cleaves the phosphodiester bond 3' to the AP site by a beta-elimination, leaving a 3'-terminal unsaturated sugar and a product with a terminal 5'-phosphate. The chain is Endonuclease III from Buchnera aphidicola subsp. Baizongia pistaciae (strain Bp).